We begin with the raw amino-acid sequence, 332 residues long: Phosphoribulokinase (332 aa).

It belongs to the phosphoribulokinase family.

The catalysed reaction is D-ribulose 5-phosphate + ATP = D-ribulose 1,5-bisphosphate + ADP + H(+). Its pathway is carbohydrate biosynthesis; Calvin cycle. In Synechocystis sp. (strain ATCC 27184 / PCC 6803 / Kazusa), this protein is Phosphoribulokinase (prk).